The primary structure comprises 615 residues: Mitogen-activated protein kinase 18 (615 aa).

The 292-residue stretch at 25-316 (YRILEVIGKG…PAEALADPYF (292 aa)) folds into the Protein kinase domain. ATP is bound by residues 31-39 (IGKGSYGVV) and K54. D151 serves as the catalytic Proton acceptor. T187 bears the Phosphothreonine mark. A TXY motif is present at residues 187–189 (TDY). Y189 carries the phosphotyrosine modification. A Phosphothreonine modification is found at T192. Disordered regions lie at residues 414–483 (RSTV…ESSV) and 510–544 (NTMTNPENRNIEASSFPPKPQNPVHQFSPTEPPAA). Positions 415–426 (STVHSTVVHSTS) are enriched in low complexity. Residues 445-459 (NGASSAGHPSTSAYP) show a composition bias toward polar residues. Over residues 464 to 473 (GPPPRVPPSG) the composition is skewed to pro residues. Composition is skewed to polar residues over residues 510–522 (NTMTNPENRNIEA) and 532–544 (PVHQFSPTEPPAA).

The protein belongs to the protein kinase superfamily. CMGC Ser/Thr protein kinase family. MAP kinase subfamily. As to quaternary structure, interacts with PHS1. Binds to MAPKKK20. Dually phosphorylated on Thr-187 and Tyr-189, which activates the enzyme. Phosphorylated by MAPKKK20. Expressed in roots, seedlings, leaves, flower buds, flowers and siliques.

It localises to the nucleus. Its subcellular location is the cytoplasm. It carries out the reaction L-seryl-[protein] + ATP = O-phospho-L-seryl-[protein] + ADP + H(+). It catalyses the reaction L-threonyl-[protein] + ATP = O-phospho-L-threonyl-[protein] + ADP + H(+). With respect to regulation, activated by threonine and tyrosine phosphorylation. Inactivated by phosphatase PHS1. Mitogen-activated protein kinase (MAPK) that is specifically regulated by PHS1 and MAPKKK20 and mediates signaling that regulates cortical microtubule functions, maybe through regulation of microtubule dynamic instability. This is Mitogen-activated protein kinase 18 from Arabidopsis thaliana (Mouse-ear cress).